The chain runs to 329 residues: Carbohydrate sulfotransferase chst-1 (329 aa).

The Cytoplasmic portion of the chain corresponds to 1–3 (MLK). Residues 4–23 (WFIISCCLLTAISYSTYYLF) form a helical; Signal-anchor for type II membrane protein membrane-spanning segment. The Lumenal segment spans residues 24 to 329 (TSNSWIKTVK…FDFDTTFINS (306 aa)). 3'-phosphoadenylyl sulfate contacts are provided by residues 91-97 (KKSMSTL) and 157-165 (RDPIARFIS).

This sequence belongs to the sulfotransferase 2 family. As to expression, highly expressed in the head and tail of hermaphrodites, in particular in amphid and phasmid sheath cells.

It is found in the golgi apparatus membrane. It catalyses the reaction chondroitin beta-D-glucuronate + n 3'-phosphoadenylyl sulfate = chondroitin 4'-sulfate + n adenosine 3',5'-bisphosphate + n H(+). Catalyzes the transfer of sulfate to position 4 of non-reducing N-acetylgalactosamine (GalNAc) residue of chondroitin. The polypeptide is Carbohydrate sulfotransferase chst-1 (Caenorhabditis elegans).